Here is a 335-residue protein sequence, read N- to C-terminus: Phenylalanine--tRNA ligase alpha subunit (335 aa).

Residue Glu-262 coordinates Mg(2+).

Belongs to the class-II aminoacyl-tRNA synthetase family. Phe-tRNA synthetase alpha subunit type 1 subfamily. As to quaternary structure, tetramer of two alpha and two beta subunits. Mg(2+) is required as a cofactor.

The protein localises to the cytoplasm. The enzyme catalyses tRNA(Phe) + L-phenylalanine + ATP = L-phenylalanyl-tRNA(Phe) + AMP + diphosphate + H(+). The protein is Phenylalanine--tRNA ligase alpha subunit of Prochlorococcus marinus (strain MIT 9313).